The following is a 439-amino-acid chain: tRNA(Ile)-lysidine synthase (439 aa).

25–30 serves as a coordination point for ATP; it reads SGGLDS.

Belongs to the tRNA(Ile)-lysidine synthase family.

The protein resides in the cytoplasm. It carries out the reaction cytidine(34) in tRNA(Ile2) + L-lysine + ATP = lysidine(34) in tRNA(Ile2) + AMP + diphosphate + H(+). Ligates lysine onto the cytidine present at position 34 of the AUA codon-specific tRNA(Ile) that contains the anticodon CAU, in an ATP-dependent manner. Cytidine is converted to lysidine, thus changing the amino acid specificity of the tRNA from methionine to isoleucine. The protein is tRNA(Ile)-lysidine synthase of Edwardsiella ictaluri (strain 93-146).